The sequence spans 83 residues: MSGNTGERPFADIITSIRYWVIHSITIPSLFIAGWLFVSTGLAYDVFGSPRPNEYFSESRQEVPLITGRFDSLEQVDAFTKSF.

The helical transmembrane segment at 21–35 (VIHSITIPSLFIAGW) threads the bilayer. H23 contributes to the heme binding site.

Belongs to the PsbE/PsbF family. In terms of assembly, heterodimer of an alpha subunit and a beta subunit. PSII is composed of 1 copy each of membrane proteins PsbA, PsbB, PsbC, PsbD, PsbE, PsbF, PsbH, PsbI, PsbJ, PsbK, PsbL, PsbM, PsbT, PsbX, PsbY, PsbZ, Psb30/Ycf12, at least 3 peripheral proteins of the oxygen-evolving complex and a large number of cofactors. It forms dimeric complexes. Heme b is required as a cofactor.

The protein resides in the plastid. It localises to the chloroplast thylakoid membrane. This b-type cytochrome is tightly associated with the reaction center of photosystem II (PSII). PSII is a light-driven water:plastoquinone oxidoreductase that uses light energy to abstract electrons from H(2)O, generating O(2) and a proton gradient subsequently used for ATP formation. It consists of a core antenna complex that captures photons, and an electron transfer chain that converts photonic excitation into a charge separation. The sequence is that of Cytochrome b559 subunit alpha from Adiantum capillus-veneris (Maidenhair fern).